A 147-amino-acid chain; its full sequence is Large ribosomal subunit protein uL11 (147 aa).

Belongs to the universal ribosomal protein uL11 family. Part of the ribosomal stalk of the 50S ribosomal subunit. Interacts with L10 and the large rRNA to form the base of the stalk. L10 forms an elongated spine to which L12 dimers bind in a sequential fashion forming a multimeric L10(L12)X complex. In terms of processing, one or more lysine residues are methylated.

In terms of biological role, forms part of the ribosomal stalk which helps the ribosome interact with GTP-bound translation factors. In Corynebacterium aurimucosum (strain ATCC 700975 / DSM 44827 / CIP 107346 / CN-1) (Corynebacterium nigricans), this protein is Large ribosomal subunit protein uL11.